The primary structure comprises 95 residues: Co-chaperonin GroES (95 aa).

The protein belongs to the GroES chaperonin family. As to quaternary structure, heptamer of 7 subunits arranged in a ring. Interacts with the chaperonin GroEL.

The protein localises to the cytoplasm. In terms of biological role, together with the chaperonin GroEL, plays an essential role in assisting protein folding. The GroEL-GroES system forms a nano-cage that allows encapsulation of the non-native substrate proteins and provides a physical environment optimized to promote and accelerate protein folding. GroES binds to the apical surface of the GroEL ring, thereby capping the opening of the GroEL channel. In Maricaulis maris (strain MCS10) (Caulobacter maris), this protein is Co-chaperonin GroES.